Reading from the N-terminus, the 230-residue chain is UPF0758 protein Daud_1467 (230 aa).

An MPN domain is found at 108 to 230 (TVRTPEEAAG…FTSLKLEGLF (123 aa)). The Zn(2+) site is built by His179, His181, and Asp192. Residues 179 to 192 (HNHPSGDPAPSPQD) carry the JAMM motif motif.

The protein belongs to the UPF0758 family.

In Desulforudis audaxviator (strain MP104C), this protein is UPF0758 protein Daud_1467.